Reading from the N-terminus, the 30-residue chain is Photosystem I reaction center subunit XII (30 aa).

The helical transmembrane segment at 7–29 threads the bilayer; sequence IYTVLCIALLAGILAIRLGSTLY.

The protein belongs to the PsaM family.

The protein resides in the plastid. Its subcellular location is the chloroplast thylakoid membrane. This chain is Photosystem I reaction center subunit XII, found in Phaeodactylum tricornutum (strain CCAP 1055/1).